We begin with the raw amino-acid sequence, 115 residues long: MREVAEDIEEIRRRKLLELQRKYLEQQKAQEEEARQQALIEAQIQAILRKILTPEARERLARVRLVRPELARQVELILVQLYQAGQITERIDDAKLKKILAQIEARTRREFRIKW.

It belongs to the PDCD5 family.

This is DNA-binding protein PYRAB09250 from Pyrococcus abyssi (strain GE5 / Orsay).